Reading from the N-terminus, the 288-residue chain is Mycothiol S-conjugate amidase (288 aa).

Histidine 12, aspartate 15, and histidine 142 together coordinate Zn(2+).

Belongs to the MshB deacetylase family. Mca subfamily. In terms of assembly, monomer. Zn(2+) serves as cofactor.

It carries out the reaction mycothiol S-conjugate + H2O = an N-acetyl-L-cysteine-S-conjugate + 1D-myo-inositol 2-amino-2-deoxy-alpha-D-glucopyranoside. Its activity is regulated as follows. Partially inhibited by MSH when MSmB (a bimane derivative of MSH) is used as substrate. Functionally, a mycothiol (MSH, N-acetyl-cysteinyl-glucosaminyl-inositol) S-conjugate amidase, it recycles conjugated MSH to the N-acetyl cysteine conjugate and the MSH precursor. Involved in MSH-dependent detoxification of a number of alkylating agents and antibiotics. Activity is specific for the mycothiol moiety. The protein is Mycothiol S-conjugate amidase of Mycolicibacterium smegmatis (strain ATCC 700084 / mc(2)155) (Mycobacterium smegmatis).